We begin with the raw amino-acid sequence, 174 residues long: Protein RESTRICTED TEV MOVEMENT 1 (174 aa).

The region spanning 1–152 (MKIGPVGKHD…LQYIGVYLRP (152 aa)) is the Jacalin-type lectin domain.

Belongs to the jacalin lectin family. As to quaternary structure, self-interacts. Interacts with RTM3. As to expression, expressed at low levels exclusively in phloem-associated cells (e.g. sieve elements and adjacent cells).

The protein resides in the cytoplasm. Its function is as follows. Required for the restriction of long-distance movement of the pathogenic tobacco etch virus (TEV) without causing a hypersensitive response or inducing systemic acquired resistance. The polypeptide is Protein RESTRICTED TEV MOVEMENT 1 (RTM1) (Arabidopsis thaliana (Mouse-ear cress)).